We begin with the raw amino-acid sequence, 159 residues long: MHCPFCNAADSKVIDSRLAAEGCQIRRRRECISCGERFTTFESYEVVMPRVIKSNGKNEPFDEAKLRRSLMHALQKRPVTQEQIEAVLSDIQLKIRRLGERDVKSRMIGEIVMQALFALDHVAYVRFASVYQDFQDVEAFRRQIEQMQQREQECEKHDV.

The segment at 3-34 (CPFCNAADSKVIDSRLAAEGCQIRRRRECISC) is a zinc-finger region. Residues 49-139 (PRVIKSNGKN…VYQDFQDVEA (91 aa)) form the ATP-cone domain.

Belongs to the NrdR family. Requires Zn(2+) as cofactor.

Negatively regulates transcription of bacterial ribonucleotide reductase nrd genes and operons by binding to NrdR-boxes. The polypeptide is Transcriptional repressor NrdR (Acinetobacter baylyi (strain ATCC 33305 / BD413 / ADP1)).